We begin with the raw amino-acid sequence, 149 residues long: SsrA-binding protein (149 aa).

The disordered stretch occupies residues 121-149 (GKKQHDKRADELDKDSKREAQRAMKERQR). Basic and acidic residues predominate over residues 127–149 (KRADELDKDSKREAQRAMKERQR).

The protein belongs to the SmpB family.

It is found in the cytoplasm. In terms of biological role, required for rescue of stalled ribosomes mediated by trans-translation. Binds to transfer-messenger RNA (tmRNA), required for stable association of tmRNA with ribosomes. tmRNA and SmpB together mimic tRNA shape, replacing the anticodon stem-loop with SmpB. tmRNA is encoded by the ssrA gene; the 2 termini fold to resemble tRNA(Ala) and it encodes a 'tag peptide', a short internal open reading frame. During trans-translation Ala-aminoacylated tmRNA acts like a tRNA, entering the A-site of stalled ribosomes, displacing the stalled mRNA. The ribosome then switches to translate the ORF on the tmRNA; the nascent peptide is terminated with the 'tag peptide' encoded by the tmRNA and targeted for degradation. The ribosome is freed to recommence translation, which seems to be the essential function of trans-translation. This Dechloromonas aromatica (strain RCB) protein is SsrA-binding protein.